A 424-amino-acid chain; its full sequence is GTPase Obg (424 aa).

The Obg domain occupies 1-160 (MFDRVEINIK…YDLILELKLI (160 aa)). Residues 161-328 (ADVAIIGYPN…LLAKVAEKLD (168 aa)) enclose the OBG-type G domain. GTP-binding positions include 167 to 174 (GYPNVGKS), 192 to 196 (FTTLS), 213 to 216 (EVPG), 280 to 283 (NKID), and 309 to 311 (SAL). Ser-174 and Thr-194 together coordinate Mg(2+). The OCT domain maps to 349-424 (PAPKGKMGFR…IITGRMEWYL (76 aa)).

This sequence belongs to the TRAFAC class OBG-HflX-like GTPase superfamily. OBG GTPase family. Monomer. Mg(2+) is required as a cofactor.

Its subcellular location is the cytoplasm. An essential GTPase which binds GTP, GDP and possibly (p)ppGpp with moderate affinity, with high nucleotide exchange rates and a fairly low GTP hydrolysis rate. Plays a role in control of the cell cycle, stress response, ribosome biogenesis and in those bacteria that undergo differentiation, in morphogenesis control. The sequence is that of GTPase Obg from Dehalococcoides mccartyi (strain ATCC BAA-2100 / JCM 16839 / KCTC 5957 / BAV1).